We begin with the raw amino-acid sequence, 501 residues long: MAINAQEISALIKKQIENFQPNFDVTETGIVTYIGDGIARARGLDNAMSGELLEFENGAYGMAQNLESNDVGIIILGDFSAIREGDVVKRTGKIMEVPVGEALIGRVVNPLGQPVDGLGDIETTGFRPVETPAPGVMQRKSVSEPLQTGLKAIDALVPIGRGQRELIIGDRQTGKTSVAIDAILNQKGQDMICIYVAIGQKESTVRTQVETLRRYGALDYTIVVTASASQPSPLLFIAPYAGVAMAEEFMYQGKHVLIVYDDLSKQAVAYRELSLLLRRPPGREAYPGDVFYLHSRLLERSAKVSDDLGGGSITALPFIETQAGDISAYIATNVISITDGQIFLQENLFNSGIRPAIDAGSSVSRVGGSAQIKAMKKVAGTLRLDLASYRELEAFTQFGSDLDAATQAKLNRGRRTVEILKQPLHKPLPVEKQVVILYALTHGFLDDVPVDDILAFEEALYDYFDVHYDNLFETIRTTKDLPEEADLDAAIKAFKDQSNFK.

169-176 serves as a coordination point for ATP; sequence GDRQTGKT.

It belongs to the ATPase alpha/beta chains family. As to quaternary structure, F-type ATPases have 2 components, CF(1) - the catalytic core - and CF(0) - the membrane proton channel. CF(1) has five subunits: alpha(3), beta(3), gamma(1), delta(1), epsilon(1). CF(0) has three main subunits: a(1), b(2) and c(9-12). The alpha and beta chains form an alternating ring which encloses part of the gamma chain. CF(1) is attached to CF(0) by a central stalk formed by the gamma and epsilon chains, while a peripheral stalk is formed by the delta and b chains.

The protein localises to the cell membrane. It carries out the reaction ATP + H2O + 4 H(+)(in) = ADP + phosphate + 5 H(+)(out). Functionally, produces ATP from ADP in the presence of a proton gradient across the membrane. The alpha chain is a regulatory subunit. In Streptococcus pyogenes serotype M2 (strain MGAS10270), this protein is ATP synthase subunit alpha.